The primary structure comprises 302 residues: Succinate--CoA ligase [ADP-forming] subunit alpha (302 aa).

CoA contacts are provided by residues 17–20 (TGST), K43, and 96–98 (ITE). Y159 contacts substrate. H247 acts as the Tele-phosphohistidine intermediate in catalysis.

This sequence belongs to the succinate/malate CoA ligase alpha subunit family. In terms of assembly, heterotetramer of two alpha and two beta subunits.

It catalyses the reaction succinate + ATP + CoA = succinyl-CoA + ADP + phosphate. The catalysed reaction is GTP + succinate + CoA = succinyl-CoA + GDP + phosphate. Its pathway is carbohydrate metabolism; tricarboxylic acid cycle; succinate from succinyl-CoA (ligase route): step 1/1. Functionally, succinyl-CoA synthetase functions in the citric acid cycle (TCA), coupling the hydrolysis of succinyl-CoA to the synthesis of either ATP or GTP and thus represents the only step of substrate-level phosphorylation in the TCA. The alpha subunit of the enzyme binds the substrates coenzyme A and phosphate, while succinate binding and nucleotide specificity is provided by the beta subunit. This is Succinate--CoA ligase [ADP-forming] subunit alpha from Staphylococcus aureus (strain COL).